The following is a 289-amino-acid chain: Syntaxin-3 (289 aa).

The Cytoplasmic segment spans residues M1–K263. A coiled-coil region spans residues M32–A111. In terms of domain architecture, t-SNARE coiled-coil homology spans L191–A253. The helical; Anchor for type IV membrane protein transmembrane segment at L264 to L284 threads the bilayer. Over S285 to N289 the chain is Extracellular.

This sequence belongs to the syntaxin family. In terms of assembly, interacts with REEP6. Interacts with PRPH2 in rod and cone photoreceptors. Interacts with ROM1. Interacts with SNAP25. Interacts with VAMP2. As to quaternary structure, interacts with IPO5. Expressed in small intestine, kidney, pancreas, placenta as well as in retina. Weaker expression in lung, liver and heart. Not expressed in brain and skeletal muscle. As to expression, expressed only in the retina. In terms of tissue distribution, ubiquitously expressed.

It localises to the apical cell membrane. It is found in the nucleus. Potentially involved in docking of synaptic vesicles at presynaptic active zones. Apical receptor involved in membrane fusion of apical vesicles. In terms of biological role, essential for survival of retinal photoreceetors. Its function is as follows. Functions as a regulator of gene expression. This chain is Syntaxin-3 (STX3), found in Homo sapiens (Human).